Here is a 311-residue protein sequence, read N- to C-terminus: Transcriptional repressor scratch 2 (311 aa).

The interval 1-20 is SNAG domain; the sequence is MPRSFLVKKIKADGFQCSGV. 2 disordered regions span residues 71 to 90 and 120 to 156; these read PAYP…PQSS and RRRA…ATAG. The segment covering 124-146 has biased composition (gly residues); sequence GAGGDAAGAGDAGGGGGGGGGGE. 4 consecutive C2H2-type zinc fingers follow at residues 161 to 183, 192 to 214, 218 to 240, and 246 to 268; these read HACA…KQTH, RKCP…VLTH, HKCG…MRSH, and FGCA…MQTH. The C2H2-type 5; atypical zinc-finger motif lies at 274–297; it reads YRCRQCDKSFALKSYLHKHCEAAC.

Belongs to the snail C2H2-type zinc-finger protein family.

It localises to the nucleus. Functionally, may be involved in transcriptional regulation. The sequence is that of Transcriptional repressor scratch 2 (Scrt2) from Mus musculus (Mouse).